Reading from the N-terminus, the 72-residue chain is Translation initiation factor IF-1 (72 aa).

The S1-like domain maps to 1–72; it reads MSKDDSIEFE…TKGRITYRMK (72 aa).

The protein belongs to the IF-1 family. In terms of assembly, component of the 30S ribosomal translation pre-initiation complex which assembles on the 30S ribosome in the order IF-2 and IF-3, IF-1 and N-formylmethionyl-tRNA(fMet); mRNA recruitment can occur at any time during PIC assembly.

The protein resides in the cytoplasm. Functionally, one of the essential components for the initiation of protein synthesis. Stabilizes the binding of IF-2 and IF-3 on the 30S subunit to which N-formylmethionyl-tRNA(fMet) subsequently binds. Helps modulate mRNA selection, yielding the 30S pre-initiation complex (PIC). Upon addition of the 50S ribosomal subunit IF-1, IF-2 and IF-3 are released leaving the mature 70S translation initiation complex. In Xanthomonas euvesicatoria pv. vesicatoria (strain 85-10) (Xanthomonas campestris pv. vesicatoria), this protein is Translation initiation factor IF-1.